A 293-amino-acid chain; its full sequence is F-box only protein 6 (293 aa).

One can recognise an F-box domain in the interval 10–57 (LDSINELPENILLELFTHVPARQLLLNCRLVCSLWRDLIDLMTLWKRK). Residues 78–259 (FYFLRSLHRN…VTNSSIVVSP (182 aa)) enclose the FBA domain. Position 258 is a phosphoserine (serine 258). The span at 261 to 271 (MTRNQASSEAQ) shows a compositional bias: polar residues. A disordered region spans residues 261-285 (MTRNQASSEAQPGQKHGQEEAAQSP). Serine 284 is modified (phosphoserine).

In terms of assembly, interacts with VCP. Part of a SCF (SKP1-cullin-F-box) protein ligase complex. Interacts with CHEK1 and CUL1.

The protein localises to the cytoplasm. The protein operates within protein modification; protein ubiquitination. Functionally, substrate-recognition component of some SCF (SKP1-CUL1-F-box protein)-type E3 ubiquitin ligase complexes. Involved in endoplasmic reticulum-associated degradation pathway (ERAD) for misfolded lumenal proteins by recognizing and binding sugar chains on unfolded glycoproteins that are retrotranslocated into the cytosol and promoting their ubiquitination and subsequent degradation. Able to recognize and bind denatured glycoproteins, which are modified with not only high-mannose but also complex-type oligosaccharides. Also recognizes sulfated glycans. Also involved in DNA damage response by specifically recognizing activated CHEK1 (phosphorylated on 'Ser-345'), promoting its ubiquitination and degradation. Ubiquitination of CHEK1 is required to ensure that activated CHEK1 does not accumulate as cells progress through S phase, or when replication forks encounter transient impediments during normal DNA replication. The protein is F-box only protein 6 (FBXO6) of Homo sapiens (Human).